A 277-amino-acid polypeptide reads, in one-letter code: NH(3)-dependent NAD(+) synthetase (277 aa).

An ATP-binding site is contributed by 36–43; the sequence is GLSGGIDS. Aspartate 42 contacts Mg(2+). Residue arginine 118 coordinates deamido-NAD(+). An ATP-binding site is contributed by threonine 138. Glutamate 143 lines the Mg(2+) pocket. 2 residues coordinate ATP: lysine 167 and serine 189.

This sequence belongs to the NAD synthetase family. In terms of assembly, homodimer.

The catalysed reaction is deamido-NAD(+) + NH4(+) + ATP = AMP + diphosphate + NAD(+) + H(+). The protein operates within cofactor biosynthesis; NAD(+) biosynthesis; NAD(+) from deamido-NAD(+) (ammonia route): step 1/1. In terms of biological role, catalyzes the ATP-dependent amidation of deamido-NAD to form NAD. Uses ammonia as a nitrogen source. This Chlorobaculum tepidum (strain ATCC 49652 / DSM 12025 / NBRC 103806 / TLS) (Chlorobium tepidum) protein is NH(3)-dependent NAD(+) synthetase.